The chain runs to 457 residues: MRVSAVAVAAPASGSGKTTIATGLIGALRQAGHTVAPFKVGPDFIDPGYHALAAGRPGRNLDPVLVGERLIGPLYAHGVAGADIAVIEGVLGLFDGRIGPAGGAPAAGSTAHVAALLGAPVILVVDARGQSHSVAALLHGFSTFDTATRIAGVILNRVGSARHEQVLRQACDQAGVAVLGAIPRTAELELPTRYLGLVTAVEYGRRARLAVQAMTAVVARHVDLAAVIACAGSQAAHPPWDPVIAVGNTARQPATVAIAAGRAFTFGYAEHAEMLRAAGAEVVEFDPLSETLPEGTDAVVLPGGFPEQFTAELSANDTVRRQINELAAAGAPVHAECAGLLYLVSELDGHPMCGVVAGSARFTQHLKLGYRDAVAVVDSALYSVGERVVGHEFHRTAVTFADSYQPAWVYQGQDVDDVRDGAVHSGVHASYLHTHPAATPGAVARFVAHAACNTPRA.

Positions 255–441 (TVAIAAGRAF…LHTHPAATPG (187 aa)) constitute a GATase cobBQ-type domain. Cysteine 337 (nucleophile) is an active-site residue.

This sequence belongs to the CobB/CbiA family. It depends on Mg(2+) as a cofactor.

It carries out the reaction hydrogenobyrinate + 2 L-glutamine + 2 ATP + 2 H2O = hydrogenobyrinate a,c-diamide + 2 L-glutamate + 2 ADP + 2 phosphate + 2 H(+). The protein operates within cofactor biosynthesis; adenosylcobalamin biosynthesis; cob(II)yrinate a,c-diamide from precorrin-2 (aerobic route): step 9/10. In terms of biological role, catalyzes the ATP-dependent amidation of the two carboxylate groups at positions a and c of hydrogenobyrinate, using either L-glutamine or ammonia as the nitrogen source. This Mycobacterium bovis (strain ATCC BAA-935 / AF2122/97) protein is Hydrogenobyrinate a,c-diamide synthase.